Consider the following 425-residue polypeptide: Glutamyl-tRNA reductase (425 aa).

Substrate is bound by residues 49–52, serine 107, 112–114, and glutamine 118; these read TCNR and EPQ. Cysteine 50 (nucleophile) is an active-site residue. 187–192 contributes to the NADP(+) binding site; it reads GAGETI.

This sequence belongs to the glutamyl-tRNA reductase family. In terms of assembly, homodimer.

The catalysed reaction is (S)-4-amino-5-oxopentanoate + tRNA(Glu) + NADP(+) = L-glutamyl-tRNA(Glu) + NADPH + H(+). The protein operates within porphyrin-containing compound metabolism; protoporphyrin-IX biosynthesis; 5-aminolevulinate from L-glutamyl-tRNA(Glu): step 1/2. In terms of biological role, catalyzes the NADPH-dependent reduction of glutamyl-tRNA(Glu) to glutamate 1-semialdehyde (GSA). The protein is Glutamyl-tRNA reductase of Pseudomonas entomophila (strain L48).